Reading from the N-terminus, the 434-residue chain is Trigger factor (434 aa).

The PPIase FKBP-type domain maps to 161–246 (EDRVTVDFSG…LKKVEERELP (86 aa)).

Belongs to the FKBP-type PPIase family. Tig subfamily.

The protein localises to the cytoplasm. It catalyses the reaction [protein]-peptidylproline (omega=180) = [protein]-peptidylproline (omega=0). In terms of biological role, involved in protein export. Acts as a chaperone by maintaining the newly synthesized protein in an open conformation. Functions as a peptidyl-prolyl cis-trans isomerase. This Serratia proteamaculans (strain 568) protein is Trigger factor.